The sequence spans 163 residues: Type-1 angiotensin II receptor-associated protein-like (163 aa).

The Extracellular portion of the chain corresponds to 1 to 28; it reads MELPAVNLKAIVFTHWLLTVFACMIDWL. The chain crosses the membrane as a helical span at residues 29-49; that stretch reads PKAYGLANITILAMGVWAIAQ. Over 50-55 the chain is Cytoplasmic; sequence RDSIDA. Residues 56-76 form a helical membrane-spanning segment; the sequence is IFMFLIGLLLTILTDILLFAL. At 77-95 the chain is on the extracellular side; it reads YFTEAEKASESGPLRDLFR. The chain crosses the membrane as a helical span at residues 96–116; it reads FSSGMGIFSLLLKPLSCFFMY. Over 117–163 the chain is Cytoplasmic; that stretch reads HMYRERGGEYFVNLGFITLSRDRSSYQSIEHMDPPADQDNKLPSRTY.

It localises to the membrane. Appears to be a negative regulator of angiotensin II type I receptor-mediated signaling. In Xenopus tropicalis (Western clawed frog), this protein is Type-1 angiotensin II receptor-associated protein-like (agtrap).